The primary structure comprises 127 residues: Glycine cleavage system H protein (127 aa).

The Lipoyl-binding domain occupies 22–104 (TVRIGITDFA…YDKAWMIVIE (83 aa)). The residue at position 63 (Lys63) is an N6-lipoyllysine.

The protein belongs to the GcvH family. The glycine cleavage system is composed of four proteins: P, T, L and H. It depends on (R)-lipoate as a cofactor.

Its function is as follows. The glycine cleavage system catalyzes the degradation of glycine. The H protein shuttles the methylamine group of glycine from the P protein to the T protein. Is also involved in protein lipoylation via its role as an octanoyl/lipoyl carrier protein intermediate. In Anoxybacillus flavithermus (strain DSM 21510 / WK1), this protein is Glycine cleavage system H protein.